The following is a 160-amino-acid chain: 3-dehydroquinate dehydratase (160 aa).

Residue Y28 is the Proton acceptor of the active site. Residues N79, H85, and D92 each coordinate substrate. The Proton donor role is filled by H105. Residues 106-107 (MS) and R116 each bind substrate.

The protein belongs to the type-II 3-dehydroquinase family. As to quaternary structure, homododecamer.

It catalyses the reaction 3-dehydroquinate = 3-dehydroshikimate + H2O. The protein operates within metabolic intermediate biosynthesis; chorismate biosynthesis; chorismate from D-erythrose 4-phosphate and phosphoenolpyruvate: step 3/7. Catalyzes a trans-dehydration via an enolate intermediate. This Gloeobacter violaceus (strain ATCC 29082 / PCC 7421) protein is 3-dehydroquinate dehydratase.